Consider the following 513-residue polypeptide: Zinc finger CCCH-type with G patch domain-containing protein (513 aa).

The C3H1-type zinc finger occupies 155–178; it reads PCSYYLEGECRFDETKCRFSHGAL. Acidic residues-rich tracts occupy residues 252–261 and 271–283; these read DQDEDDELSS and DSSD…MDDL. Residues 252–283 are disordered; sequence DQDEDDELSSEESNSSMNDDSSDEAESDMDDL. The region spanning 312 to 358 is the G-patch domain; it reads TRGIGSKLMEKMGYIHGTGLGSDGRGIVTPVSAQILPQGRSLDACME. The span at 455–467 shows a compositional bias: basic and acidic residues; that stretch reads DMAKVKQSLDRNS. The tract at residues 455–513 is disordered; sequence DMAKVKQSLDRNSGDAQLQKRLQVQMESHKQELATLQAQERSLSKEQQTRKSKNKMFEF. Positions 468-480 are enriched in polar residues; that stretch reads GDAQLQKRLQVQM. Over residues 496–513 the composition is skewed to basic and acidic residues; it reads SLSKEQQTRKSKNKMFEF.

It localises to the nucleus. Its function is as follows. Transcription repressor. The sequence is that of Zinc finger CCCH-type with G patch domain-containing protein from Drosophila yakuba (Fruit fly).